Consider the following 696-residue polypeptide: Golgi integral membrane protein 4 (696 aa).

A lipid anchor (N-myristoyl glycine) is attached at Gly-2. Over 2–12 the chain is Cytoplasmic; the sequence is GNGMCSRKQKR. Residues 13–33 traverse the membrane as a helical; Signal-anchor for type II membrane protein segment; sequence IFQTLLLLTVVFGFLYGAMLY. Residues 34 to 696 lie on the Lumenal side of the membrane; sequence YELQTQLRKA…AEKSHRRAEM (663 aa). Positions 35–244 form a coiled coil; the sequence is ELQTQLRKAE…KQLKDTLNRI (210 aa). Residues 38-107 are golgi targeting; the sequence is TQLRKAEAVA…ETLNKGRQDS (70 aa). Residues 80-175 are endosome targeting; that stretch reads LEHKKAKEDF…QELSKLKETV (96 aa). 3 disordered regions span residues 122–145, 244–391, and 427–696; these read KSQH…QGED, IPSL…HARA, and LREH…RAEM. The span at 123 to 145 shows a compositional bias: basic and acidic residues; the sequence is SQHEELKKQHSDLEEEHRKQGED. Positions 176-248 are golgi targeting; sequence YNLREENRQL…DTLNRIPSLR (73 aa). Positions 254–269 are enriched in polar residues; it reads EQQNVTQVAHSPQGYN. Asn-257 is a glycosylation site (N-linked (GlcNAc...) asparagine). Basic and acidic residues-rich tracts occupy residues 271–281, 298–313, 324–343, 355–364, and 370–380; these read AREKPTREVQE, RAED…KEAE, EVER…RKAL, EHLEEEHDPS, and REWKEQHEQRE. The residue at position 364 (Ser-364) is a Phosphoserine. The segment covering 436-453 has biased composition (low complexity); it reads QQRLQGHLLRQQEQQQQQ. Composition is skewed to basic and acidic residues over residues 464–476 and 505–545; these read AELE…HQEQ and AYER…RAAV. Ser-538 is subject to Phosphoserine. Positions 604-626 are enriched in acidic residues; it reads QQEDNVDEQYQEEAEEEVQEDLT. Phosphotyrosine is present on Tyr-613. Thr-626 carries the phosphothreonine modification. 2 stretches are compositionally biased toward basic and acidic residues: residues 627–638 and 661–672; these read EEKKRELEHNAE and RDDNRPKGREEH. Phosphotyrosine is present on Tyr-673. Positions 673-683 are enriched in acidic residues; that stretch reads YEEEEEEEEDG.

The protein belongs to the GOLIM4 family. Phosphorylated probably by c-AMP-dependent kinases in its lumenal part. Post-translationally, O-glycosylated; modified by sialic acid residues. In terms of processing, N-glycosylated; N-glycans are probably of the complex type and modified by sialic acid residues.

Its subcellular location is the golgi apparatus. It localises to the golgi stack membrane. The protein localises to the endosome membrane. The protein resides in the membrane. Its function is as follows. Plays a role in endosome to Golgi protein trafficking; mediates protein transport along the late endosome-bypass pathway from the early endosome to the Golgi. The polypeptide is Golgi integral membrane protein 4 (GOLIM4) (Homo sapiens (Human)).